A 543-amino-acid polypeptide reads, in one-letter code: CTP synthase (543 aa).

The tract at residues 1–267 (MKQTKYIFVT…LSPIAEILDL (267 aa)) is amidoligase domain. Serine 15 contacts CTP. Serine 15 contributes to the UTP binding site. Residues 16–21 (SLGKGI) and aspartate 73 contribute to the ATP site. Residues aspartate 73 and glutamate 141 each contribute to the Mg(2+) site. Residues 148 to 150 (DIE), 188 to 193 (KTKPTQ), and lysine 224 each bind CTP. UTP contacts are provided by residues 188 to 193 (KTKPTQ) and lysine 224. Positions 292 to 543 (KIAFVGKYVD…IKAAINYEDN (252 aa)) constitute a Glutamine amidotransferase type-1 domain. Glycine 354 serves as a coordination point for L-glutamine. Cysteine 381 serves as the catalytic Nucleophile; for glutamine hydrolysis. Residues 382–385 (LGMQ), glutamate 405, and arginine 473 each bind L-glutamine. Residues histidine 516 and glutamate 518 contribute to the active site.

Belongs to the CTP synthase family. In terms of assembly, homotetramer.

It carries out the reaction UTP + L-glutamine + ATP + H2O = CTP + L-glutamate + ADP + phosphate + 2 H(+). It catalyses the reaction L-glutamine + H2O = L-glutamate + NH4(+). The enzyme catalyses UTP + NH4(+) + ATP = CTP + ADP + phosphate + 2 H(+). The protein operates within pyrimidine metabolism; CTP biosynthesis via de novo pathway; CTP from UDP: step 2/2. With respect to regulation, allosterically activated by GTP, when glutamine is the substrate; GTP has no effect on the reaction when ammonia is the substrate. The allosteric effector GTP functions by stabilizing the protein conformation that binds the tetrahedral intermediate(s) formed during glutamine hydrolysis. Inhibited by the product CTP, via allosteric rather than competitive inhibition. Its function is as follows. Catalyzes the ATP-dependent amination of UTP to CTP with either L-glutamine or ammonia as the source of nitrogen. Regulates intracellular CTP levels through interactions with the four ribonucleotide triphosphates. The chain is CTP synthase from Campylobacter jejuni subsp. jejuni serotype O:2 (strain ATCC 700819 / NCTC 11168).